The chain runs to 155 residues: Small ribosomal subunit protein uS7c (155 aa).

The protein belongs to the universal ribosomal protein uS7 family. Part of the 30S ribosomal subunit.

It localises to the plastid. The protein resides in the chloroplast. Its function is as follows. One of the primary rRNA binding proteins, it binds directly to 16S rRNA where it nucleates assembly of the head domain of the 30S subunit. This is Small ribosomal subunit protein uS7c (rps7) from Coelogyne cristata (Orchid).